The sequence spans 143 residues: Deoxyuridine 5'-triphosphate nucleotidohydrolase (143 aa).

Residues 62–64 (RSG), Asn75, 79–81 (TID), and Lys89 each bind substrate.

Belongs to the dUTPase family. Mg(2+) serves as cofactor.

It catalyses the reaction dUTP + H2O = dUMP + diphosphate + H(+). It participates in pyrimidine metabolism; dUMP biosynthesis; dUMP from dCTP (dUTP route): step 2/2. Its function is as follows. This enzyme is involved in nucleotide metabolism: it produces dUMP, the immediate precursor of thymidine nucleotides and it decreases the intracellular concentration of dUTP so that uracil cannot be incorporated into DNA. The chain is Deoxyuridine 5'-triphosphate nucleotidohydrolase from Clostridium kluyveri (strain ATCC 8527 / DSM 555 / NBRC 12016 / NCIMB 10680 / K1).